Consider the following 217-residue polypeptide: Cytochrome c biogenesis ATP-binding export protein CcmA (217 aa).

The ABC transporter domain occupies 6 to 216 (LQLEQLACQR…QYKFFDQGNM (211 aa)). 38-45 (GHNGIGKT) lines the ATP pocket.

It belongs to the ABC transporter superfamily. CcmA exporter (TC 3.A.1.107) family. As to quaternary structure, the complex is composed of two ATP-binding proteins (CcmA) and two transmembrane proteins (CcmB).

It localises to the cell inner membrane. It carries out the reaction heme b(in) + ATP + H2O = heme b(out) + ADP + phosphate + H(+). Functionally, part of the ABC transporter complex CcmAB involved in the biogenesis of c-type cytochromes; once thought to export heme, this seems not to be the case, but its exact role is uncertain. Responsible for energy coupling to the transport system. The polypeptide is Cytochrome c biogenesis ATP-binding export protein CcmA (Histophilus somni (strain 129Pt) (Haemophilus somnus)).